The chain runs to 257 residues: Urease accessory protein UreD (257 aa).

This sequence belongs to the UreD family. As to quaternary structure, ureD, UreF and UreG form a complex that acts as a GTP-hydrolysis-dependent molecular chaperone, activating the urease apoprotein by helping to assemble the nickel containing metallocenter of UreC. The UreE protein probably delivers the nickel.

It localises to the cytoplasm. Required for maturation of urease via the functional incorporation of the urease nickel metallocenter. In Sporosarcina pasteurii (Bacillus pasteurii), this protein is Urease accessory protein UreD.